The following is a 417-amino-acid chain: Serine hydroxymethyltransferase 2 (417 aa).

(6S)-5,6,7,8-tetrahydrofolate is bound by residues L121 and 125–127 (GHL). N6-(pyridoxal phosphate)lysine is present on K230. 355–357 (SPF) lines the (6S)-5,6,7,8-tetrahydrofolate pocket.

The protein belongs to the SHMT family. As to quaternary structure, homodimer. Requires pyridoxal 5'-phosphate as cofactor.

It is found in the cytoplasm. The catalysed reaction is (6R)-5,10-methylene-5,6,7,8-tetrahydrofolate + glycine + H2O = (6S)-5,6,7,8-tetrahydrofolate + L-serine. It participates in one-carbon metabolism; tetrahydrofolate interconversion. The protein operates within amino-acid biosynthesis; glycine biosynthesis; glycine from L-serine: step 1/1. Its function is as follows. Catalyzes the reversible interconversion of serine and glycine with tetrahydrofolate (THF) serving as the one-carbon carrier. This reaction serves as the major source of one-carbon groups required for the biosynthesis of purines, thymidylate, methionine, and other important biomolecules. Also exhibits THF-independent aldolase activity toward beta-hydroxyamino acids, producing glycine and aldehydes, via a retro-aldol mechanism. The protein is Serine hydroxymethyltransferase 2 of Pseudomonas savastanoi pv. phaseolicola (strain 1448A / Race 6) (Pseudomonas syringae pv. phaseolicola (strain 1448A / Race 6)).